A 901-amino-acid polypeptide reads, in one-letter code: Alanine--tRNA ligase (901 aa).

Residues H581, H585, C684, and H688 each contribute to the Zn(2+) site.

This sequence belongs to the class-II aminoacyl-tRNA synthetase family. Requires Zn(2+) as cofactor.

The protein resides in the cytoplasm. It carries out the reaction tRNA(Ala) + L-alanine + ATP = L-alanyl-tRNA(Ala) + AMP + diphosphate. Functionally, catalyzes the attachment of alanine to tRNA(Ala) in a two-step reaction: alanine is first activated by ATP to form Ala-AMP and then transferred to the acceptor end of tRNA(Ala). Also edits incorrectly charged Ser-tRNA(Ala) and Gly-tRNA(Ala) via its editing domain. In Mycobacterium marinum (strain ATCC BAA-535 / M), this protein is Alanine--tRNA ligase.